A 196-amino-acid polypeptide reads, in one-letter code: Molybdenum cofactor guanylyltransferase (196 aa).

Residues leucine 10 to glycine 12, lysine 23, asparagine 51, aspartate 69, and aspartate 99 contribute to the GTP site. Aspartate 99 provides a ligand contact to Mg(2+).

It belongs to the MobA family. Monomer. Mg(2+) serves as cofactor.

It is found in the cytoplasm. It catalyses the reaction Mo-molybdopterin + GTP + H(+) = Mo-molybdopterin guanine dinucleotide + diphosphate. Functionally, transfers a GMP moiety from GTP to Mo-molybdopterin (Mo-MPT) cofactor (Moco or molybdenum cofactor) to form Mo-molybdopterin guanine dinucleotide (Mo-MGD) cofactor. The protein is Molybdenum cofactor guanylyltransferase of Shewanella baltica (strain OS185).